The primary structure comprises 272 residues: MISVNPSTSNLEKLDLHNLPAEQTALDIKNLDLYYGEDQALYDISMRIPNNRVTAFIGPSGCGKSTLLRCINRMNDLVEICRIEGQIDMHGHNIYGKNVDVASLRRRVGMVFQRPNPFPKSIYENVVYGLRLQGVKDKRVLDEAVETSLRGAALWDEVKDRLNASAFSLSGGQQQRLVIARSIAIEPEILLLDEPTSALDPISTLTIEELITDLKDKYTVVIVTHNMQQAARVSDQTAFLYMGKLIEYADTDTLFTTPSEKQTEDYITGRYG.

The region spanning 26 to 267 is the ABC transporter domain; the sequence is LDIKNLDLYY…PSEKQTEDYI (242 aa). 58–65 contributes to the ATP binding site; it reads GPSGCGKS.

This sequence belongs to the ABC transporter superfamily. Phosphate importer (TC 3.A.1.7) family. As to quaternary structure, the complex is composed of two ATP-binding proteins (PstB), two transmembrane proteins (PstC and PstA) and a solute-binding protein (PstS).

The protein localises to the cell inner membrane. It carries out the reaction phosphate(out) + ATP + H2O = ADP + 2 phosphate(in) + H(+). Part of the ABC transporter complex PstSACB involved in phosphate import. Responsible for energy coupling to the transport system. The protein is Phosphate import ATP-binding protein PstB of Idiomarina loihiensis (strain ATCC BAA-735 / DSM 15497 / L2-TR).